A 511-amino-acid chain; its full sequence is Putative thymidine phosphorylase (511 aa).

Belongs to the thymidine/pyrimidine-nucleoside phosphorylase family. Type 2 subfamily.

The enzyme catalyses thymidine + phosphate = 2-deoxy-alpha-D-ribose 1-phosphate + thymine. This is Putative thymidine phosphorylase from Polaromonas sp. (strain JS666 / ATCC BAA-500).